A 122-amino-acid polypeptide reads, in one-letter code: Large ribosomal subunit protein bL12 (122 aa).

It belongs to the bacterial ribosomal protein bL12 family. Homodimer. Part of the ribosomal stalk of the 50S ribosomal subunit. Forms a multimeric L10(L12)X complex, where L10 forms an elongated spine to which 2 to 4 L12 dimers bind in a sequential fashion. Binds GTP-bound translation factors.

Functionally, forms part of the ribosomal stalk which helps the ribosome interact with GTP-bound translation factors. Is thus essential for accurate translation. This chain is Large ribosomal subunit protein bL12, found in Pseudomonas entomophila (strain L48).